The following is a 141-amino-acid chain: Putative antirestriction protein YubI (141 aa).

It belongs to the antirestriction protein family.

The sequence is that of Putative antirestriction protein YubI (yubI) from Escherichia coli (strain K12).